A 185-amino-acid polypeptide reads, in one-letter code: Elongation factor P (185 aa).

This sequence belongs to the elongation factor P family.

The protein resides in the cytoplasm. It participates in protein biosynthesis; polypeptide chain elongation. Involved in peptide bond synthesis. Stimulates efficient translation and peptide-bond synthesis on native or reconstituted 70S ribosomes in vitro. Probably functions indirectly by altering the affinity of the ribosome for aminoacyl-tRNA, thus increasing their reactivity as acceptors for peptidyl transferase. The chain is Elongation factor P from Methylobacillus flagellatus (strain ATCC 51484 / DSM 6875 / VKM B-1610 / KT).